The following is a 397-amino-acid chain: MPTRLFTSESVTEGHPDKIADAISDAVLDAMLTEDSHSHAAVETVVTTGQVMVCGEVTTEAYVDIADIARSRILDIGYDSSSKGFDGASCGVSVAIDAQSPDIAQGVTAAYETRHGSTDLIDSQGAGDQGLMFGYACTETPSLMPLPIDMAHALSLQLTKVRKEGALDYLCPDGKTQVTIRYNEDDKPVAVDTVIVSSQHRAGIDLDATMTPDLRRLVIDPVLERYDLDHKDMRVLVNPTGKFVIGGPMGDAGLTGRKIIVDTYGGMARHGGGAFSGKDPSKVDRSGAYAMRWVAKNVVAAGLADRCECQVAYAIGAARPVGFRIDTFGTNHVPETVIERAVGEVFDLRPGAIIADLDLLRPIYSQLVAGGHFGRELPGVTWELTDRAEALAATARL.

His15 contacts ATP. Mg(2+) is bound at residue Asp17. Residue Glu43 coordinates K(+). L-methionine contacts are provided by Glu56 and Gln99. Residues 99 to 109 form a flexible loop region; it reads QSPDIAQGVTA. ATP is bound by residues 173-175, 242-243, Asp251, 257-258, Ala274, and Lys278; these read DGK, KF, and RK. Asp251 lines the L-methionine pocket. Lys282 provides a ligand contact to L-methionine.

It belongs to the AdoMet synthase family. Homotetramer; dimer of dimers. Mg(2+) is required as a cofactor. K(+) serves as cofactor.

The protein resides in the cytoplasm. It catalyses the reaction L-methionine + ATP + H2O = S-adenosyl-L-methionine + phosphate + diphosphate. It functions in the pathway amino-acid biosynthesis; S-adenosyl-L-methionine biosynthesis; S-adenosyl-L-methionine from L-methionine: step 1/1. Catalyzes the formation of S-adenosylmethionine (AdoMet) from methionine and ATP. The overall synthetic reaction is composed of two sequential steps, AdoMet formation and the subsequent tripolyphosphate hydrolysis which occurs prior to release of AdoMet from the enzyme. This is S-adenosylmethionine synthase from Cutibacterium acnes (strain DSM 16379 / KPA171202) (Propionibacterium acnes).